Consider the following 163-residue polypeptide: Nucleotide-binding protein Cj0374 (163 aa).

Belongs to the YajQ family.

Nucleotide-binding protein. This is Nucleotide-binding protein Cj0374 from Campylobacter jejuni subsp. jejuni serotype O:2 (strain ATCC 700819 / NCTC 11168).